The following is an 81-amino-acid chain: Photosystem I iron-sulfur center (81 aa).

2 4Fe-4S ferredoxin-type domains span residues 2 to 31 (SHSV…MIPW) and 39 to 68 (IASA…VRVS). 8 residues coordinate [4Fe-4S] cluster: C11, C14, C17, C21, C48, C51, C54, and C58.

In terms of assembly, the eukaryotic PSI reaction center is composed of at least 11 subunits. The cofactor is [4Fe-4S] cluster.

The protein resides in the plastid. The protein localises to the chloroplast thylakoid membrane. It carries out the reaction reduced [plastocyanin] + hnu + oxidized [2Fe-2S]-[ferredoxin] = oxidized [plastocyanin] + reduced [2Fe-2S]-[ferredoxin]. Functionally, apoprotein for the two 4Fe-4S centers FA and FB of photosystem I (PSI); essential for photochemical activity. FB is the terminal electron acceptor of PSI, donating electrons to ferredoxin. The C-terminus interacts with PsaA/B/D and helps assemble the protein into the PSI complex. Required for binding of PsaD and PsaE to PSI. PSI is a plastocyanin-ferredoxin oxidoreductase, converting photonic excitation into a charge separation, which transfers an electron from the donor P700 chlorophyll pair to the spectroscopically characterized acceptors A0, A1, FX, FA and FB in turn. The polypeptide is Photosystem I iron-sulfur center (Daucus carota (Wild carrot)).